A 265-amino-acid chain; its full sequence is NADH dehydrogenase [ubiquinone] iron-sulfur protein 3, mitochondrial (265 aa).

A mitochondrion-targeting transit peptide spans 1-33 (MAALIRNLGARAAVAALSAKHVVPAAGSTALRM).

The protein belongs to the complex I 30 kDa subunit family. As to quaternary structure, part of the mitochondrial membrane respiratory chain NADH dehydrogenase (Complex I). Interacts with sicily; interaction is stronger with unprocessed sicily protein.

It is found in the mitochondrion. The catalysed reaction is a ubiquinone + NADH + 5 H(+)(in) = a ubiquinol + NAD(+) + 4 H(+)(out). In terms of biological role, core subunit of the mitochondrial membrane respiratory chain NADH dehydrogenase (Complex I) that is believed to belong to the minimal assembly required for catalysis. Complex I functions in the transfer of electrons from NADH to the respiratory chain. The immediate electron acceptor for the enzyme is believed to be ubiquinone. This chain is NADH dehydrogenase [ubiquinone] iron-sulfur protein 3, mitochondrial, found in Drosophila melanogaster (Fruit fly).